A 629-amino-acid polypeptide reads, in one-letter code: Acetylcholinesterase (629 aa).

Residues methionine 1–histidine 38 form the signal peptide. A disulfide bridge links cysteine 103 with cysteine 130. N-linked (GlcNAc...) asparagine glycosylation is present at asparagine 125. The active-site Acyl-ester intermediate is serine 253. Cysteine 307 and cysteine 322 are joined by a disulfide. Asparagine 308 carries N-linked (GlcNAc...) asparagine glycosylation. Residue glutamate 382 is the Charge relay system of the active site. Residue asparagine 418 is glycosylated (N-linked (GlcNAc...) asparagine). A disulfide bond links cysteine 458 and cysteine 574. The active-site Charge relay system is the histidine 496. Residue asparagine 509 is glycosylated (N-linked (GlcNAc...) asparagine). The GPI-anchor amidated serine moiety is linked to residue serine 605. Residues serine 606–leucine 629 constitute a propeptide, removed in mature form.

The protein belongs to the type-B carboxylesterase/lipase family. In terms of assembly, homodimer; disulfide-linked. The N-terminus is blocked.

The protein resides in the synapse. Its subcellular location is the cell membrane. The catalysed reaction is acetylcholine + H2O = choline + acetate + H(+). Its function is as follows. Rapidly hydrolyzes choline released into the synapse. This Leptinotarsa decemlineata (Colorado potato beetle) protein is Acetylcholinesterase.